The sequence spans 1137 residues: MARYTQRPENALKRANEFIEVGKPLRALDTLQEVFRNKRWNYAYSETVIEPLMFKYLYLCVELKKSHIAKEGLFQYRNMFQLVNVNSLENVIRGYLKMAEEHTEAAQAQSSAAVAVLELDDLDNIATPESILMSAVCGEDAQDRSDRTILLPWVKFLWESYCQCLELLRVNTHCEALYHDIARMAFHFCLKYNRKSEFRRLCDKLRKHLEDICKSSNQTTGVSINKVETQQLCLDTRLYLLDSAIQMELWQEAYRAIEDIHGLMALSKKTPVPKTMANYYQKLAMVFSKAGNQLFHAAALLKLFQLTRELKKNLTKDDLQRMAAHVLLATLSIPLPSAHPEFDRFIEADKSPLEKAQKLAVLLGLPQPPTRVSLIREVVRLNVPQLVSEDFRNLYNWLEVDFNPLNLCKRIQSIVDFIENGPENALLTPYIQSLKDVTIMRLIRQISQVYESIEFQRLMQLASFCNIFELEKLLVESVRHNDMQIRIDHQKNSIYFGTDLTESQREYRPDGPALQSMPSEQIRSQLVNMSTVLTRAVSIVYPNRERDQRAKLRTQMVNHYHEIKDREHQRILQRQKIIEDRKEYIEKQNNAREEEEARRQEEESRKAKLAEQKRLEQEQEERERKRHQNEIQAIREKSLKEKVQQISQTAHGKKMLSKLDEEGIKKLDAEQIAKRESEELQREAKELQSKLKSQEKKIDYFERAKRLEEIPLFEKYLAEKQVKDKEFWEATEKTRIENAIAERKDAVGQQERLKRMYPDRDEFLDALKKERASLYVEKLKKFEAALEAERKKRLADRIIRRREERRQAFLREKEEERLRKEEEIRLAQAAEERAAAEARRLEREAEDEKRRAQYEKQRAKEEEAERKIKEDRERLARELASERERTEKERDTWRPRGGDRPSAPSGGSGEWRRGAPTVNNERGIERGGDRIERGGDRIERGGERIERGGDRDRKDNEGADSSWRVRREPDSQRAAAPKDSGAPQSRDEKWRRGGERDRDFRNDGARRDRDDGPRRDRDDGPRRDRDDERSGFRRNDGPRRTEEPQRETGGNWRDAPRHADRENRRTAGGERRDRDVRETRGDQRGPAPKEAVSSGGGGNWRTTPAAREEKPATKRDQPQEKENKAADDGEWTSVKRR.

In terms of domain architecture, PCI spans 319 to 501 (LQRMAAHVLL…NSIYFGTDLT (183 aa)). Basic and acidic residues-rich tracts occupy residues 588–623 (QNNAREEEEARRQEEESRKAKLAEQKRLEQEQEERE) and 829–899 (AAEE…RGGD). Disordered regions lie at residues 588-631 (QNNA…QNEI) and 829-1137 (AAEE…VKRR). A Phosphoserine modification is found at Ser908. 4 stretches are compositionally biased toward basic and acidic residues: residues 922-971 (RGIE…EPDS), 985-1046 (SRDE…EPQR), 1054-1083 (DAPRHADRENRRTAGGERRDRDVRETRGDQ), and 1106-1127 (AREEKPATKRDQPQEKENKAAD).

The protein belongs to the eIF-3 subunit A family. As to quaternary structure, component of the eukaryotic translation initiation factor 3 (eIF-3) complex. The eIF-3 complex interacts with pix.

Its subcellular location is the cytoplasm. Its function is as follows. RNA-binding component of the eukaryotic translation initiation factor 3 (eIF-3) complex, which is involved in protein synthesis of a specialized repertoire of mRNAs and, together with other initiation factors, stimulates binding of mRNA and methionyl-tRNAi to the 40S ribosome. The eIF-3 complex specifically targets and initiates translation of a subset of mRNAs involved in cell proliferation. The polypeptide is Eukaryotic translation initiation factor 3 subunit A (Drosophila yakuba (Fruit fly)).